Consider the following 1154-residue polypeptide: Paired amphipathic helix protein pst3 (1154 aa).

Disordered stretches follow at residues 1-71 (MDVM…RSVT) and 91-110 (SGKD…SSSN). Basic and acidic residues predominate over residues 9–27 (DSERDNPGDKVETQSDKNH). Polar residues-rich tracts occupy residues 32–45 (SPSQ…TSLH) and 100–110 (QNAEGLSSSSN). The PAH 1 domain maps to 111–181 (RPLDVNDALS…EGFNTFLPSG (71 aa)). 2 disordered regions span residues 199–249 (GTPM…STEN) and 321–376 (DNVD…KTSR). The span at 228–241 (STSPTDSQPQPSAP) shows a compositional bias: low complexity. One can recognise a PAH 2 domain in the interval 252–322 (PRVDFNYAIA…EEFKLFLPDN (71 aa)). 2 stretches are compositionally biased toward polar residues: residues 323 to 337 (VDST…QKSP) and 365 to 376 (AQISRSISKTSR). A PAH 3 domain is found at 403-472 (SPYAATQEEL…LWFSEFIRWS (70 aa)). The segment at 797–824 (NSNNTNVSFQTDETQTEDETMSDIHPDD) is disordered.

The protein resides in the nucleus. This is Paired amphipathic helix protein pst3 (pst3) from Schizosaccharomyces pombe (strain 972 / ATCC 24843) (Fission yeast).